The primary structure comprises 429 residues: Trigger factor (429 aa).

Residues 161–246 (EDRVTIDFTG…LKKVEERELP (86 aa)) enclose the PPIase FKBP-type domain.

This sequence belongs to the FKBP-type PPIase family. Tig subfamily. Homodimer and monomer. In vivo most of the ribosomes are in complex with monomeric TF. Uncomplexed TF, however, is in a monomer-dimer equilibrium with approximately two thirds of TF existing in a dimeric state.

The protein resides in the cytoplasm. It carries out the reaction [protein]-peptidylproline (omega=180) = [protein]-peptidylproline (omega=0). Its function is as follows. Involved in protein export. Acts as a chaperone by maintaining the newly synthesized protein in an open conformation. Functions as a peptidyl-prolyl cis-trans isomerase. In Escherichia coli O45:K1 (strain S88 / ExPEC), this protein is Trigger factor.